A 298-amino-acid polypeptide reads, in one-letter code: Replication protein A 32 kDa subunit B (298 aa).

The OB DNA-binding region spans 89 to 163 (VRLVGRMLNK…QVVAYSVRRI (75 aa)).

This sequence belongs to the replication factor A protein 2 family. As to quaternary structure, heterotrimer of RPA1, RPA2 and RPA3 (canonical replication protein A complex). Interacts with RPA1A and RPA3. Phosphorylated in a cell-cycle-dependent manner (from the S phase until mitosis). In response to DNA damage, recruited to DNA-repair nuclear foci, as a hypophosphorylated form.

The protein localises to the nucleus. In terms of biological role, component of the replication protein A complex (RPA) required for DNA recombination, repair and replication. The activity of RPA is mediated by single-stranded DNA binding and protein interactions. In Oryza sativa subsp. japonica (Rice), this protein is Replication protein A 32 kDa subunit B (RPA2B).